The sequence spans 283 residues: Bifunctional protein FolD (283 aa).

NADP(+)-binding positions include 164–166 (GRS), Ser189, and Ile230.

Belongs to the tetrahydrofolate dehydrogenase/cyclohydrolase family. Homodimer.

The catalysed reaction is (6R)-5,10-methylene-5,6,7,8-tetrahydrofolate + NADP(+) = (6R)-5,10-methenyltetrahydrofolate + NADPH. It carries out the reaction (6R)-5,10-methenyltetrahydrofolate + H2O = (6R)-10-formyltetrahydrofolate + H(+). Its pathway is one-carbon metabolism; tetrahydrofolate interconversion. Its function is as follows. Catalyzes the oxidation of 5,10-methylenetetrahydrofolate to 5,10-methenyltetrahydrofolate and then the hydrolysis of 5,10-methenyltetrahydrofolate to 10-formyltetrahydrofolate. The polypeptide is Bifunctional protein FolD (Lactobacillus delbrueckii subsp. bulgaricus (strain ATCC 11842 / DSM 20081 / BCRC 10696 / JCM 1002 / NBRC 13953 / NCIMB 11778 / NCTC 12712 / WDCM 00102 / Lb 14)).